A 92-amino-acid chain; its full sequence is MGSSRFLVLMVSLALVTLVAAEGVKGNIEKPEVCPADNVRCIKSDPPQCHTDQDCQGIRKCCYLHCGFKCVIPVKELEEGGNQDEDVSRPCP.

The first 23 residues, 1-23 (MGSSRFLVLMVSLALVTLVAAEG), serve as a signal peptide directing secretion. Positions 27–74 (NIEKPEVCPADNVRCIKSDPPQCHTDQDCQGIRKCCYLHCGFKCVIPV) constitute a WAP domain. 4 disulfides stabilise this stretch: Cys34-Cys62, Cys41-Cys66, Cys49-Cys61, and Cys55-Cys70.

The protein resides in the secreted. Antibacterial protein. Putative acid-stable proteinase inhibitor. The sequence is that of WAP four-disulfide core domain protein 12 (WFDC12) from Aotus nancymaae (Ma's night monkey).